Consider the following 362-residue polypeptide: Putative HLA class I histocompatibility antigen, alpha chain H (362 aa).

A signal peptide spans 1–24 (MVLMAPRTLLLLLSGALALTQTWA). Residues 25–114 (RSHSMRYFYT…ALRYYNQSEG (90 aa)) form an alpha-1 region. Topologically, residues 25–308 (RSHSMRYFYT…EPSSQPTVPI (284 aa)) are extracellular. The N-linked (GlcNAc...) asparagine glycan is linked to Asn110. The tract at residues 115–206 (GSHTMQVMYG…ENGKETLQRA (92 aa)) is alpha-2. The interval 207 to 298 (DPPKTHMTHH…GLPEPLTLRW (92 aa)) is alpha-3. One can recognise an Ig-like C1-type domain in the interval 209-297 (PKTHMTHHPI…EGLPEPLTLR (89 aa)). The cysteines at positions 227 and 283 are disulfide-linked. The connecting peptide stretch occupies residues 299 to 308 (EPSSQPTVPI). A helical membrane pass occupies residues 309–332 (VGIVAGLVLLVAVVTGAVVAAVMW). The Cytoplasmic portion of the chain corresponds to 333-362 (RKKSSDRKGGSYSQAASSNSAQGSDVSLTA). Positions 337–362 (SDRKGGSYSQAASSNSAQGSDVSLTA) are disordered. Over residues 342–356 (GSYSQAASSNSAQGS) the composition is skewed to low complexity.

Belongs to the MHC class I family. Heterodimer of an alpha chain and a beta chain (beta-2-microglobulin).

It localises to the cell membrane. Involved in the presentation of foreign antigens to the immune system. In Homo sapiens (Human), this protein is Putative HLA class I histocompatibility antigen, alpha chain H (HLA-H).